A 441-amino-acid polypeptide reads, in one-letter code: Insulinoma-associated protein 1 (441 aa).

The span at 1–12 (MPKGFLVKRSRK) shows a compositional bias: basic residues. Residues 1-20 (MPKGFLVKRSRKSPPVSYRV) are SNAG domain. Disordered regions lie at residues 1-31 (MPKG…GESL), 43-189 (TGGA…KAIR), 205-224 (LKIK…SSGP), and 278-316 (RWHK…EDGL). Over residues 19-28 (RVREEEEPRG) the composition is skewed to basic and acidic residues. The span at 74 to 83 (NPDTVQQALY) shows a compositional bias: polar residues. Residues 89–98 (VSREQRERKY) are compositionally biased toward basic and acidic residues. Low complexity-rich tracts occupy residues 138–147 (VSSSSSVSRS) and 169–180 (GATSSSAPSKPP). The C2H2-type 1 zinc-finger motif lies at 258 to 280 (YRCPECHKVFSCPANLASHRRWH). The span at 292–302 (AKEEPLSDRDT) shows a compositional bias: basic and acidic residues. 3 consecutive C2H2-type zinc fingers follow at residues 317-339 (YECP…LLSH), 372-395 (HPCP…RLLH), and 400-423 (YPCK…NKCH).

The protein belongs to the INSM1 family.

The protein localises to the nucleus. In terms of biological role, may act as a transcriptional regulator. Plays a role in noradrenergic neuron, pancreatic and gastrointestinal endocrine cells differentiation during embryonic development. The sequence is that of Insulinoma-associated protein 1 (insm1) from Xenopus tropicalis (Western clawed frog).